The following is a 1003-amino-acid chain: PHD finger protein 12 (1003 aa).

A disordered region spans residues 29–59; that stretch reads APPKTDEAEKRSRKPEKESRRSGRATNHDSC. Positions 32-59 are enriched in basic and acidic residues; that stretch reads KTDEAEKRSRKPEKESRRSGRATNHDSC. The segment at 56-105 adopts a PHD-type 1 zinc-finger fold; the sequence is HDSCDSCKEGGDLLCCDHCPAAFHLQCCNPPLSEEMLPPGEWMCHRCTVR. The Zn(2+) site is built by Cys59, Ser61, Cys62, His79, and Cys82. 2 disordered regions span residues 110 to 183 and 234 to 255; these read EQKK…HNDV and TTAL…KNVK. 2 positions are modified to phosphoserine: Ser131 and Ser134. Over residues 138-161 the composition is skewed to basic and acidic residues; it reads LLDRPASKTELKAIAHARILERRA. Residues 165 to 178 show a composition bias toward polar residues; it reads GTPTSNASTETPTS. The interval 202 to 241 is SIN3 interacting domain 1; it reads VQPQLRRPFELLIAAAMERNPTQFQLPNELTCTTALPGSS. The segment at 271–321 adopts a PHD-type 2; atypical zinc-finger fold; sequence VKVCFTCNRSCRVAPLIQCDYCPLLFHMDCLEPPLTAMPLGRWMCPNHIEH. Zn(2+) contacts are provided by Cys274, Cys277, Cys289, Cys292, His297, Cys300, Cys315, and His318. The interval 328–364 is SIN3 interacting domain 2; that stretch reads NLTLSNRCQVFDRFQDTISQHVVKVDFLNRIHKKHPP. Residue Lys467 forms a Glycyl lysine isopeptide (Lys-Gly) (interchain with G-Cter in SUMO2) linkage. Disordered regions lie at residues 531–583 and 641–671; these read KAPC…GWPR and HRKT…VLTP. Phosphoserine is present on Ser555. Phosphothreonine is present on residues Thr557 and Thr570. Residues 641–656 are compositionally biased toward polar residues; it reads HRKTVQSQIGPSSTES. A Phosphothreonine modification is found at Thr670. The region spanning 814–868 is the FHA domain; that stretch reads LYIGTGADMDVCLTNYGHCNYVSGKHACIFYDENTKHYELLNYSEHGTTVDNVLY. The tract at residues 894–922 is disordered; that stretch reads RRRHQKQDEEPSEEAAMMSSQAQGPQRRP. Lys899 is covalently cross-linked (Glycyl lysine isopeptide (Lys-Gly) (interchain with G-Cter in SUMO2)). The span at 907–916 shows a compositional bias: low complexity; the sequence is EAAMMSSQAQ. Residues Lys972, Lys986, and Lys990 each participate in a glycyl lysine isopeptide (Lys-Gly) (interchain with G-Cter in SUMO2) cross-link.

In terms of assembly, component of SIN3 complexes. Interacts with SIN3A in a complex composed of HDAC1, SAP30 and SIN3A. Component of the SIN3B complex, which includes SIN3B, HDAC2 or HDAC1, PHF12 and MORF4L1; interacts directly with all subunits. Interacts with TLE5. As to expression, expressed mainly in heart, brain, lung, liver and testis.

The protein localises to the nucleus. Its function is as follows. Transcriptional repressor acting as key scaffolding subunit of SIN3 complexes which contributes to complex assembly by contacting each core subunit domain, stabilizes the complex and constitutes the substrate receptor by recruiting the H3 histone tail. SIN3 complexes are composed of a SIN3 scaffold subunit, one catalytic core (HDAC1 or HDAC2) and 2 chromatin targeting modules. SIN3B complex represses transcription and counteracts the histone acetyltransferase activity of EP300 through the recognition H3K27ac marks by PHF12 and the activity of the histone deacetylase HDAC2. SIN3B complex is recruited downstream of the constitutively active genes transcriptional start sites through interaction with histones and mitigates histone acetylation and RNA polymerase II progression within transcribed regions contributing to the regulation of transcription. May also repress transcription in a SIN3A-independent manner through recruitment of functional TLE5 complexes to DNA. May also play a role in ribosomal biogenesis. The chain is PHD finger protein 12 from Mus musculus (Mouse).